Here is a 476-residue protein sequence, read N- to C-terminus: MKVCCIGAGYVGGPTCAVMALKCPDIVITLVDKSSERIAQWNSDKLPIYEPGLDEVVKKCRNVNLFFSTDIETAIKEADLIFISVNTPTKTCGNGKGRAADLKYVESAARMIAEIAQSNKIVVEKSTVPVRAAESIMHILRANQKPGIHYDILSNPEFLAEGTAINDLLNADRVLIGGEETPEGHQAVEKLSWIYEHWIPKQNILTTNTWSSELSKLAANAFLAQRISSINSLSAVCEATGADVSEVARAVGLDSRIGSKFLQASVGFGGSCFQKDILNLIYICENLNLPEVAAYWQQVIDMNEYQKRRFSQKIIESLFNTVSDKRIAILGFAFKKNTGDTRETAAITVCQTLLEEGAALDIYDPKVEPEQIIDDLTHPSVTESPEKVKKAVQIHSDPYSAVRATHALVICTEWDEFVDLDFKRIYQSMMKPAYIFDGRKILDHERLQQIGFHVQTIGKKYQRTGLLRSWGIVPQL.

NAD(+) is bound by residues 7 to 12, D32, R37, 85 to 89, 126 to 127, and E161; these read GAGYVG, VNTPT, and ST. Substrate-binding positions include 157 to 161, 216 to 220, R256, and 263 to 269; these read EFLAE, KLAAN, and QASVGFG. C272 serves as the catalytic Nucleophile. 272–275 lines the NAD(+) pocket; the sequence is CFQK. 334–335 lines the substrate pocket; it reads FK. NAD(+) is bound at residue R342. R439 lines the substrate pocket.

This sequence belongs to the UDP-glucose/GDP-mannose dehydrogenase family.

The catalysed reaction is UDP-alpha-D-glucose + 2 NAD(+) + H2O = UDP-alpha-D-glucuronate + 2 NADH + 3 H(+). Its pathway is nucleotide-sugar biosynthesis; UDP-alpha-D-glucuronate biosynthesis; UDP-alpha-D-glucuronate from UDP-alpha-D-glucose: step 1/1. Its function is as follows. Involved in the biosynthesis of glycosaminoglycans; hyaluronan, chondroitin sulfate and heparan sulfate. Required for wingless signaling in different tissues. The sequence is that of UDP-glucose 6-dehydrogenase (sgl) from Drosophila melanogaster (Fruit fly).